Consider the following 266-residue polypeptide: Putative [LysW]-aminoadipate/[LysW]-glutamate kinase (266 aa).

Substrate-binding positions include 36–37 (GG), Arg-63, and Asn-168.

Belongs to the acetylglutamate kinase family. LysZ subfamily.

It is found in the cytoplasm. The enzyme catalyses [amino-group carrier protein]-C-terminal-N-(1,4-dicarboxybutan-1-yl)-L-glutamine + ATP = [amino-group carrier protein]-C-terminal-N-(1-carboxy-5-phosphooxy-5-oxopentan-1-yl)-L-glutamine + ADP. The catalysed reaction is [amino-group carrier protein]-C-terminal-gamma-(L-glutamyl)-L-glutamate + ATP = [amino-group carrier protein]-C-terminal-gamma-(5-phospho-L-glutamyl)-L-glutamate + ADP. It functions in the pathway amino-acid biosynthesis; L-lysine biosynthesis via AAA pathway; L-lysine from L-alpha-aminoadipate (Thermus route): step 2/5. The protein operates within amino-acid biosynthesis; L-arginine biosynthesis. Involved in both the arginine and lysine biosynthetic pathways. Phosphorylates the LysW-bound precursors glutamate (for arginine biosynthesis), respectively alpha-aminoadipate (for lysine biosynthesis). The sequence is that of Putative [LysW]-aminoadipate/[LysW]-glutamate kinase from Cenarchaeum symbiosum (strain A).